We begin with the raw amino-acid sequence, 194 residues long: E3 ubiquitin-protein ligase RNF4 (194 aa).

The span at 1–12 (MSTRNPQRKRRG) shows a compositional bias: basic residues. Positions 1–20 (MSTRNPQRKRRGGTVNSRQT) are required for ubiquitination activity. Residues 1 to 39 (MSTRNPQRKRRGGTVNSRQTQKRTRETTSTPEVSLETEP) are disordered. The segment at 6–65 (PQRKRRGGTVNSRQTQKRTRETTSTPEVSLETEPIELVETVGDEIVDLTCESLEPVVVDL) is mediates interaction with TRPS1. An SUMO interaction motif 1; mediates the binding to polysumoylated substrates motif is present at residues 40–43 (IELV). Residues 50–53 (IVDL) carry the SUMO interaction motif 2; mediates the binding to polysumoylated substrates motif. The short motif at 61 to 63 (VVV) is the SUMO interaction motif 3; mediates the binding to polysumoylated substrates element. The SUMO interaction motif 4; mediates the binding to polysumoylated substrates signature appears at 71–74 (VVIV). Ser-98 and Ser-99 each carry phosphoserine. The segment at 110 to 130 (VYVTTHTPRSTKDDGATGPRP) is disordered. Residues Cys-136, Cys-139, Cys-158, His-160, Cys-163, Cys-166, Cys-177, and Cys-180 each contribute to the Zn(2+) site. An RING-type zinc finger spans residues 136–181 (CPICMDGYSEIVQNGRLIVSTECGHVFCSQCLRDSLKNANTCPTCR).

As to quaternary structure, homodimer (via RING-type zinc finger domain). Interacts with GSC2. Interacts with AR/the androgen receptor and TBP. Interacts with TCF20. Interacts with PATZ1. Interacts with TRPS1; negatively regulates TRPS1 transcriptional repressor activity. Interacts with PML (isoform PML-1, isoform PML-2, isoform PML-3, isoform PML-4, isoform PML-5 and isoform PML-6). Interacts with PRDM1/Blimp-1. In terms of processing, sumoylated; conjugated by one or two SUMO1 moieties. Autoubiquitinated. As to expression, in the embryo, expressed primarily in the developing nervous system with strong expression in the dorsal root ganglia and gonads. Ubiquitously expressed in the adult.

The protein resides in the cytoplasm. The protein localises to the nucleus. It is found in the PML body. The enzyme catalyses S-ubiquitinyl-[E2 ubiquitin-conjugating enzyme]-L-cysteine + [acceptor protein]-L-lysine = [E2 ubiquitin-conjugating enzyme]-L-cysteine + N(6)-ubiquitinyl-[acceptor protein]-L-lysine.. Its pathway is protein modification; protein ubiquitination. Its function is as follows. E3 ubiquitin-protein ligase which binds polysumoylated chains covalently attached to proteins and mediates 'Lys-6'-, 'Lys-11'-, 'Lys-48'- and 'Lys-63'-linked polyubiquitination of those substrates and their subsequent targeting to the proteasome for degradation. Regulates the degradation of several proteins including PML and the transcriptional activator PEA3. Involved in chromosome alignment and spindle assembly, it regulates the kinetochore CENPH-CENPI-CENPK complex by targeting polysumoylated CENPI to proteasomal degradation. Regulates the cellular responses to hypoxia and heat shock through degradation of respectively EPAS1 and PARP1. Alternatively, it may also bind DNA/nucleosomes and have a more direct role in the regulation of transcription for instance enhancing basal transcription and steroid receptor-mediated transcriptional activation. Catalyzes ubiquitination of sumoylated PARP1 in response to PARP1 trapping to chromatin, leading to PARP1 removal from chromatin by VCP/p97. The chain is E3 ubiquitin-protein ligase RNF4 from Mus musculus (Mouse).